The following is a 396-amino-acid chain: Phosphoglycerate kinase (396 aa).

Substrate contacts are provided by residues 22-24 (DFN), R37, 60-63 (HFGR), R118, and R151. ATP contacts are provided by residues K201, E322, and 352 to 355 (GGDS).

It belongs to the phosphoglycerate kinase family. In terms of assembly, monomer.

It is found in the cytoplasm. The catalysed reaction is (2R)-3-phosphoglycerate + ATP = (2R)-3-phospho-glyceroyl phosphate + ADP. The protein operates within carbohydrate degradation; glycolysis; pyruvate from D-glyceraldehyde 3-phosphate: step 2/5. The protein is Phosphoglycerate kinase of Wolbachia pipientis subsp. Culex pipiens (strain wPip).